The following is a 1065-amino-acid chain: Carbamoyl phosphate synthase large chain (1065 aa).

The interval 1 to 401 (MPKRRDIETI…SLLKAVRSLE (401 aa)) is carboxyphosphate synthetic domain. ATP contacts are provided by Arg-129, Arg-169, Gly-175, Gly-176, Arg-208, Ile-210, Glu-215, Gly-241, Ile-242, His-243, Gln-284, and Glu-298. Residues 133–327 (RALMNELGEP…IAKLAAKIAV (195 aa)) form the ATP-grasp 1 domain. Mg(2+) contacts are provided by Gln-284, Glu-298, and Asn-300. Positions 284, 298, and 300 each coordinate Mn(2+). Positions 402-546 (IGVHHLELNE…YSTYEEENES (145 aa)) are oligomerization domain. Residues 547–929 (IVTEKPSVIV…ALYKGLVASG (383 aa)) are carbamoyl phosphate synthetic domain. Residues 671–861 (EQALSELGIP…MANLATKAIL (191 aa)) form the ATP-grasp 2 domain. Positions 707, 746, 748, 752, 777, 778, 779, 780, 820, and 832 each coordinate ATP. Residues Gln-820, Glu-832, and Asn-834 each contribute to the Mg(2+) site. Residues Gln-820, Glu-832, and Asn-834 each coordinate Mn(2+). One can recognise an MGS-like domain in the interval 930 to 1065 (IHIQPHGAVL…TAMTEGLVRS (136 aa)). An allosteric domain region spans residues 930-1065 (IHIQPHGAVL…TAMTEGLVRS (136 aa)).

It belongs to the CarB family. In terms of assembly, composed of two chains; the small (or glutamine) chain promotes the hydrolysis of glutamine to ammonia, which is used by the large (or ammonia) chain to synthesize carbamoyl phosphate. Tetramer of heterodimers (alpha,beta)4. It depends on Mg(2+) as a cofactor. Requires Mn(2+) as cofactor.

It carries out the reaction hydrogencarbonate + L-glutamine + 2 ATP + H2O = carbamoyl phosphate + L-glutamate + 2 ADP + phosphate + 2 H(+). The enzyme catalyses hydrogencarbonate + NH4(+) + 2 ATP = carbamoyl phosphate + 2 ADP + phosphate + 2 H(+). Its pathway is amino-acid biosynthesis; L-arginine biosynthesis; carbamoyl phosphate from bicarbonate: step 1/1. It functions in the pathway pyrimidine metabolism; UMP biosynthesis via de novo pathway; (S)-dihydroorotate from bicarbonate: step 1/3. In terms of biological role, large subunit of the glutamine-dependent carbamoyl phosphate synthetase (CPSase). CPSase catalyzes the formation of carbamoyl phosphate from the ammonia moiety of glutamine, carbonate, and phosphate donated by ATP, constituting the first step of 2 biosynthetic pathways, one leading to arginine and/or urea and the other to pyrimidine nucleotides. The large subunit (synthetase) binds the substrates ammonia (free or transferred from glutamine from the small subunit), hydrogencarbonate and ATP and carries out an ATP-coupled ligase reaction, activating hydrogencarbonate by forming carboxy phosphate which reacts with ammonia to form carbamoyl phosphate. The chain is Carbamoyl phosphate synthase large chain from Bacillus caldolyticus.